The primary structure comprises 571 residues: Carboxylesterase 3 (571 aa).

Positions 1–26 (MERAVRVESGVLVGVVCLLLACPATA) are cleaved as a signal peptide. Cysteines 97 and 124 form a disulfide. The N-linked (GlcNAc...) asparagine glycan is linked to N105. The active-site Acyl-ester intermediate is the S229. C281 and C292 form a disulfide bridge. Catalysis depends on charge relay system residues E347 and H460. The Prevents secretion from ER motif lies at 568–571 (QEDL).

Belongs to the type-B carboxylesterase/lipase family. In terms of processing, N-glycosylated. As to expression, expressed in liver, colon and small intestine.

The protein resides in the endoplasmic reticulum lumen. The catalysed reaction is a carboxylic ester + H2O = an alcohol + a carboxylate + H(+). Functionally, involved in the detoxification of xenobiotics and in the activation of ester and amide prodrugs. Shows low catalytic efficiency for hydrolysis of CPT-11 (7-ethyl-10-[4-(1-piperidino)-1-piperidino]-carbonyloxycamptothecin), a prodrug for camptothecin used in cancer therapeutics. The polypeptide is Carboxylesterase 3 (CES3) (Homo sapiens (Human)).